The sequence spans 85 residues: Large ribosomal subunit protein bL27 (85 aa).

The tract at residues 1-21 (MAHKKGGGSTKNGRDSNPKYL) is disordered.

The protein belongs to the bacterial ribosomal protein bL27 family.

This is Large ribosomal subunit protein bL27 from Chlorobium chlorochromatii (strain CaD3).